Here is a 617-residue protein sequence, read N- to C-terminus: RNA polymerase sigma factor RpoD (617 aa).

Positions 170–220 (PDDGSLPAEEVEPVNLKDDSADSKEKDDEEEESDDSSDSDDEGDGGPDPEE) are disordered. The segment covering 184 to 195 (NLKDDSADSKEK) has biased composition (basic and acidic residues). The span at 196-218 (DDEEEESDDSSDSDDEGDGGPDP) shows a compositional bias: acidic residues. The sigma-70 factor domain-2 stretch occupies residues 383 to 453 (MVEANLRLVI…TRSIADQART (71 aa)). Residues 407-410 (DLIQ) carry the Interaction with polymerase core subunit RpoC motif. Residues 462–538 (ETINKLNRIS…DSTMQSPIEM (77 aa)) form a sigma-70 factor domain-3 region. The interval 551–604 (VLAGLTAREAKVLRMRFGIDMNTDHTLEEVGKQFDVTRERIRQIEAKALRKLRH) is sigma-70 factor domain-4. Residues 577 to 596 (LEEVGKQFDVTRERIRQIEA) constitute a DNA-binding region (H-T-H motif).

The protein belongs to the sigma-70 factor family. RpoD/SigA subfamily. In terms of assembly, interacts transiently with the RNA polymerase catalytic core.

Its subcellular location is the cytoplasm. In terms of biological role, sigma factors are initiation factors that promote the attachment of RNA polymerase to specific initiation sites and are then released. This sigma factor is the primary sigma factor during exponential growth. The sequence is that of RNA polymerase sigma factor RpoD from Pseudomonas aeruginosa (strain ATCC 15692 / DSM 22644 / CIP 104116 / JCM 14847 / LMG 12228 / 1C / PRS 101 / PAO1).